Here is a 688-residue protein sequence, read N- to C-terminus: Potassium-transporting ATPase ATP-binding subunit (688 aa).

4 consecutive transmembrane segments (helical) span residues 34 to 54 (PVMF…LAIL), 62 to 82 (AMFT…ANMA), 219 to 239 (VALT…TATL), and 260 to 280 (VLVA…LSAI). The active-site 4-aspartylphosphate intermediate is aspartate 313. Residues aspartate 350, glutamate 354, 383–390 (FSAQTRMS), and lysine 401 contribute to the ATP site. Mg(2+) contacts are provided by aspartate 524 and aspartate 528. The next 3 helical transmembrane spans lie at 594-614 (FAII…LNIM), 622-642 (AILS…PLAL), and 662-682 (IYGL…DLLL).

This sequence belongs to the cation transport ATPase (P-type) (TC 3.A.3) family. Type IA subfamily. The system is composed of three essential subunits: KdpA, KdpB and KdpC.

It localises to the cell inner membrane. The enzyme catalyses K(+)(out) + ATP + H2O = K(+)(in) + ADP + phosphate + H(+). Its function is as follows. Part of the high-affinity ATP-driven potassium transport (or Kdp) system, which catalyzes the hydrolysis of ATP coupled with the electrogenic transport of potassium into the cytoplasm. This subunit is responsible for energy coupling to the transport system and for the release of the potassium ions to the cytoplasm. The sequence is that of Potassium-transporting ATPase ATP-binding subunit from Yersinia pseudotuberculosis serotype I (strain IP32953).